Consider the following 322-residue polypeptide: Ribose-phosphate pyrophosphokinase (322 aa).

Residues 43-45 and 102-103 contribute to the ATP site; these read DGE and RQ. Mg(2+)-binding residues include H137 and D177. K201 is an active-site residue. D-ribose 5-phosphate is bound by residues R203, D227, and 231–235; that span reads DTAGT.

Belongs to the ribose-phosphate pyrophosphokinase family. Class I subfamily. In terms of assembly, homohexamer. Requires Mg(2+) as cofactor.

The protein localises to the cytoplasm. The catalysed reaction is D-ribose 5-phosphate + ATP = 5-phospho-alpha-D-ribose 1-diphosphate + AMP + H(+). Its pathway is metabolic intermediate biosynthesis; 5-phospho-alpha-D-ribose 1-diphosphate biosynthesis; 5-phospho-alpha-D-ribose 1-diphosphate from D-ribose 5-phosphate (route I): step 1/1. In terms of biological role, involved in the biosynthesis of the central metabolite phospho-alpha-D-ribosyl-1-pyrophosphate (PRPP) via the transfer of pyrophosphoryl group from ATP to 1-hydroxyl of ribose-5-phosphate (Rib-5-P). This is Ribose-phosphate pyrophosphokinase from Xylella fastidiosa (strain Temecula1 / ATCC 700964).